The chain runs to 286 residues: Thymidylate synthase (286 aa).

Position 27 (Arg27) interacts with dUMP. His57 is a (6R)-5,10-methylene-5,6,7,8-tetrahydrofolate binding site. Residue 148–149 coordinates dUMP; that stretch reads RR. Cys168 (nucleophile) is an active-site residue. DUMP-binding positions include 188–191, Asn199, and 229–231; these read RSAD and HLY. Asp191 lines the (6R)-5,10-methylene-5,6,7,8-tetrahydrofolate pocket. Ala285 is a binding site for (6R)-5,10-methylene-5,6,7,8-tetrahydrofolate.

Belongs to the thymidylate synthase family. Bacterial-type ThyA subfamily. As to quaternary structure, homodimer.

The protein resides in the cytoplasm. It catalyses the reaction dUMP + (6R)-5,10-methylene-5,6,7,8-tetrahydrofolate = 7,8-dihydrofolate + dTMP. The protein operates within pyrimidine metabolism; dTTP biosynthesis. Its function is as follows. Catalyzes the reductive methylation of 2'-deoxyuridine-5'-monophosphate (dUMP) to 2'-deoxythymidine-5'-monophosphate (dTMP) while utilizing 5,10-methylenetetrahydrofolate (mTHF) as the methyl donor and reductant in the reaction, yielding dihydrofolate (DHF) as a by-product. This enzymatic reaction provides an intracellular de novo source of dTMP, an essential precursor for DNA biosynthesis. The sequence is that of Thymidylate synthase from Psychrobacter sp. (strain PRwf-1).